The following is a 513-amino-acid chain: Probable mannosyl-oligosaccharide alpha-1,2-mannosidase 1B (513 aa).

Positions 1–21 (MHLSSLSLSLTALAIVSPSAA) are cleaved as a signal peptide. N-linked (GlcNAc...) asparagine glycans are attached at residues asparagine 97, asparagine 117, asparagine 184, asparagine 251, asparagine 322, asparagine 348, and asparagine 368. Cysteine 334 and cysteine 363 are disulfide-bonded. Catalysis depends on glutamate 377, which acts as the Proton donor. Threonine 503 is a Ca(2+) binding site.

This sequence belongs to the glycosyl hydrolase 47 family. In terms of assembly, monomer. Ca(2+) serves as cofactor. Mg(2+) is required as a cofactor.

The protein localises to the cytoplasmic vesicle lumen. The enzyme catalyses N(4)-(alpha-D-Man-(1-&gt;2)-alpha-D-Man-(1-&gt;2)-alpha-D-Man-(1-&gt;3)-[alpha-D-Man-(1-&gt;2)-alpha-D-Man-(1-&gt;3)-[alpha-D-Man-(1-&gt;2)-alpha-D-Man-(1-&gt;6)]-alpha-D-Man-(1-&gt;6)]-beta-D-Man-(1-&gt;4)-beta-D-GlcNAc-(1-&gt;4)-beta-D-GlcNAc)-L-asparaginyl-[protein] (N-glucan mannose isomer 9A1,2,3B1,2,3) + 4 H2O = N(4)-(alpha-D-Man-(1-&gt;3)-[alpha-D-Man-(1-&gt;3)-[alpha-D-Man-(1-&gt;6)]-alpha-D-Man-(1-&gt;6)]-beta-D-Man-(1-&gt;4)-beta-D-GlcNAc-(1-&gt;4)-beta-D-GlcNAc)-L-asparaginyl-[protein] (N-glucan mannose isomer 5A1,2) + 4 beta-D-mannose. The catalysed reaction is N(4)-(alpha-D-Man-(1-&gt;2)-alpha-D-Man-(1-&gt;2)-alpha-D-Man-(1-&gt;3)-[alpha-D-Man-(1-&gt;3)-[alpha-D-Man-(1-&gt;2)-alpha-D-Man-(1-&gt;6)]-alpha-D-Man-(1-&gt;6)]-beta-D-Man-(1-&gt;4)-beta-D-GlcNAc-(1-&gt;4)-beta-D-GlcNAc)-L-asparaginyl-[protein] (N-glucan mannose isomer 8A1,2,3B1,3) + 3 H2O = N(4)-(alpha-D-Man-(1-&gt;3)-[alpha-D-Man-(1-&gt;3)-[alpha-D-Man-(1-&gt;6)]-alpha-D-Man-(1-&gt;6)]-beta-D-Man-(1-&gt;4)-beta-D-GlcNAc-(1-&gt;4)-beta-D-GlcNAc)-L-asparaginyl-[protein] (N-glucan mannose isomer 5A1,2) + 3 beta-D-mannose. The protein operates within protein modification; protein glycosylation. Its function is as follows. Involved in the maturation of Asn-linked oligosaccharides. Progressively trims alpha-1,2-linked mannose residues from Man(9)GlcNAc(2) to produce Man(5)GlcNAc(2). This is Probable mannosyl-oligosaccharide alpha-1,2-mannosidase 1B (mns1B) from Aspergillus niger (strain ATCC MYA-4892 / CBS 513.88 / FGSC A1513).